The sequence spans 529 residues: Acid-sensing ion channel 1C (529 aa).

Over 1-51 (MTAMKGDSEDSIESMRPSNLQVFANNSTLHGMSHIFAYGHMTFRRFLWTLS) the chain is Cytoplasmic. The helical transmembrane segment at 52-68 (FMGSLGLLMYVCMDRVY) threads the bilayer. The Extracellular portion of the chain corresponds to 69 to 427 (YYFEFPHVTK…EKIEQKKAYE (359 aa)). Asn86, Asn155, and Asn161 each carry an N-linked (GlcNAc...) asparagine glycan. Intrachain disulfides connect Cys95-Cys196, Cys174-Cys181, Cys292-Cys367, Cys310-Cys363, Cys314-Cys361, Cys323-Cys345, and Cys325-Cys337. An N-linked (GlcNAc...) asparagine glycan is attached at Asn185. N-linked (GlcNAc...) asparagine glycosylation is found at Asn368 and Asn395. Residues 428–458 (VAGLLGDIGGQMGLFIGASVLTILEIFDYLY) traverse the membrane as a discontinuously helical segment. The GAS motif; ion selectivity filter signature appears at 444–446 (GAS). At 459–529 (EVLKDKILGS…PFVVGSNSGK (71 aa)) the chain is on the cytoplasmic side.

It belongs to the amiloride-sensitive sodium channel (TC 1.A.6) family. ASIC1 subfamily. In terms of assembly, homotrimer. Heterotrimer; with other ASIC proteins producing channel with different properties. Interacts with asic1a. Expressed in central nervous system.

The protein resides in the cell membrane. Its subcellular location is the postsynaptic cell membrane. It localises to the cell projection. The protein localises to the dendrite. The catalysed reaction is Na(+)(in) = Na(+)(out). The enzyme catalyses K(+)(in) = K(+)(out). It catalyses the reaction Li(+)(in) = Li(+)(out). It carries out the reaction Ca(2+)(in) = Ca(2+)(out). With respect to regulation, inhibited by the diuretic drug amiloride. In terms of biological role, forms voltage-independent, pH-gated trimeric sodium channels that act as postsynaptic excitatory receptors in the nervous system, playing a crucial role in regulating synaptic plasticity, learning, and memory. Upon extracellular pH drop this channel elicits transient, fast activating, and completely desensitizing inward currents. Displays high selectivity for sodium ions but can also permit the permeation of other cations. In Danio rerio (Zebrafish), this protein is Acid-sensing ion channel 1C.